Here is a 542-residue protein sequence, read N- to C-terminus: Adenine deaminase (542 aa).

It belongs to the metallo-dependent hydrolases superfamily. Adenine deaminase family. Mn(2+) serves as cofactor.

It carries out the reaction adenine + H2O + H(+) = hypoxanthine + NH4(+). In Methanosphaera stadtmanae (strain ATCC 43021 / DSM 3091 / JCM 11832 / MCB-3), this protein is Adenine deaminase.